A 258-amino-acid polypeptide reads, in one-letter code: MTTTLTTDLNADAGESFGHWPLGDDARLFPLLTSVNLALGFHAGDPVTLHSAVRLARQHGLGIGAHPGYPDLVGFGRRELALTPLEIQAATLYQIGALQAFLTVEGGTLQHVKAHGALYMRIHEDRAAGEAFCHAVQQLVPQAYLIVLAGAAGSDLALTAAAHGLRVRREAFPERAYTGDGRLASRQLPGSSIHDPAEAARRAVGMAQGWVQTLGGERLALEMDTLCIHGDNPQAVAIAGAIRAALAENGVTLARLHD.

Belongs to the LamB/PxpA family. Forms a complex composed of PxpA, PxpB and PxpC.

It catalyses the reaction 5-oxo-L-proline + ATP + 2 H2O = L-glutamate + ADP + phosphate + H(+). Catalyzes the cleavage of 5-oxoproline to form L-glutamate coupled to the hydrolysis of ATP to ADP and inorganic phosphate. This is 5-oxoprolinase subunit A from Deinococcus radiodurans (strain ATCC 13939 / DSM 20539 / JCM 16871 / CCUG 27074 / LMG 4051 / NBRC 15346 / NCIMB 9279 / VKM B-1422 / R1).